Reading from the N-terminus, the 92-residue chain is MPRSLKKGPFIDLHLLKKVEKAVESGDKKPVKTWSRRSMIIPTMINLTIAVHNGRQHVPVFVTEDMIGHKLGEFAPTRTYRGHAADKKAKKR.

This sequence belongs to the universal ribosomal protein uS19 family.

In terms of biological role, protein S19 forms a complex with S13 that binds strongly to the 16S ribosomal RNA. This Aliivibrio fischeri (strain ATCC 700601 / ES114) (Vibrio fischeri) protein is Small ribosomal subunit protein uS19.